Here is a 431-residue protein sequence, read N- to C-terminus: Acetylornithine aminotransferase (431 aa).

Residues 118-119 (GA) and F157 contribute to the pyridoxal 5'-phosphate site. R160 provides a ligand contact to N(2)-acetyl-L-ornithine. Residue 251–254 (DEVQ) participates in pyridoxal 5'-phosphate binding. Residue K284 is modified to N6-(pyridoxal phosphate)lysine. S313 contacts N(2)-acetyl-L-ornithine. A pyridoxal 5'-phosphate-binding site is contributed by T314.

The protein belongs to the class-III pyridoxal-phosphate-dependent aminotransferase family. ArgD subfamily. In terms of assembly, homodimer. The cofactor is pyridoxal 5'-phosphate.

It localises to the cytoplasm. It carries out the reaction N(2)-acetyl-L-ornithine + 2-oxoglutarate = N-acetyl-L-glutamate 5-semialdehyde + L-glutamate. The protein operates within amino-acid biosynthesis; L-arginine biosynthesis; N(2)-acetyl-L-ornithine from L-glutamate: step 4/4. The chain is Acetylornithine aminotransferase from Bifidobacterium longum (strain NCC 2705).